Reading from the N-terminus, the 290-residue chain is Shikimate dehydrogenase (NADP(+)) (290 aa).

Shikimate contacts are provided by residues Ser-20–Ser-22 and Thr-67. The Proton acceptor role is filled by Lys-71. Shikimate is bound by residues Asn-92 and Asp-107. NADP(+)-binding positions include Gly-132–Ala-136 and Met-228. Tyr-230 contacts shikimate. NADP(+) is bound at residue Gly-251.

The protein belongs to the shikimate dehydrogenase family. In terms of assembly, homodimer.

It catalyses the reaction shikimate + NADP(+) = 3-dehydroshikimate + NADPH + H(+). It functions in the pathway metabolic intermediate biosynthesis; chorismate biosynthesis; chorismate from D-erythrose 4-phosphate and phosphoenolpyruvate: step 4/7. Its function is as follows. Involved in the biosynthesis of the chorismate, which leads to the biosynthesis of aromatic amino acids. Catalyzes the reversible NADPH linked reduction of 3-dehydroshikimate (DHSA) to yield shikimate (SA). The sequence is that of Shikimate dehydrogenase (NADP(+)) from Geobacter sp. (strain M21).